The following is a 291-amino-acid chain: 4-diphosphocytidyl-2-C-methyl-D-erythritol kinase (291 aa).

Residue Lys11 is part of the active site. Residue 95-105 participates in ATP binding; it reads PVAAGMAGGSS. Residue Asp137 is part of the active site.

The protein belongs to the GHMP kinase family. IspE subfamily.

It carries out the reaction 4-CDP-2-C-methyl-D-erythritol + ATP = 4-CDP-2-C-methyl-D-erythritol 2-phosphate + ADP + H(+). The protein operates within isoprenoid biosynthesis; isopentenyl diphosphate biosynthesis via DXP pathway; isopentenyl diphosphate from 1-deoxy-D-xylulose 5-phosphate: step 3/6. Functionally, catalyzes the phosphorylation of the position 2 hydroxy group of 4-diphosphocytidyl-2C-methyl-D-erythritol. In Lachnoclostridium phytofermentans (strain ATCC 700394 / DSM 18823 / ISDg) (Clostridium phytofermentans), this protein is 4-diphosphocytidyl-2-C-methyl-D-erythritol kinase.